The primary structure comprises 940 residues: UvrABC system protein A (940 aa).

Gly31–Ser38 lines the ATP pocket. The C4-type zinc finger occupies Cys253–Cys280. ABC transporter domains lie at Trp310–Leu587 and Ala607–Lys937. An ATP-binding site is contributed by Gly640–Ser647. The C4-type zinc finger occupies Cys740–Cys766.

Belongs to the ABC transporter superfamily. UvrA family. In terms of assembly, forms a heterotetramer with UvrB during the search for lesions.

Its subcellular location is the cytoplasm. The UvrABC repair system catalyzes the recognition and processing of DNA lesions. UvrA is an ATPase and a DNA-binding protein. A damage recognition complex composed of 2 UvrA and 2 UvrB subunits scans DNA for abnormalities. When the presence of a lesion has been verified by UvrB, the UvrA molecules dissociate. Functionally, plays a role in recovery after DNA ADP-ribosylation. The polypeptide is UvrABC system protein A (Escherichia coli O127:H6 (strain E2348/69 / EPEC)).